The following is a 74-amino-acid chain: ATP synthase subunit 9, mitochondrial (74 aa).

Transmembrane regions (helical) follow at residues 12 to 32 (LATI…AALI) and 50 to 70 (ILGF…AFLL).

The protein belongs to the ATPase C chain family. In terms of assembly, F-type ATPases have 2 components, CF(1) - the catalytic core - and CF(0) - the membrane proton channel. CF(1) has five subunits: alpha(3), beta(3), gamma(1), delta(1), epsilon(1). CF(0) has three main subunits: a, b and c.

Its subcellular location is the mitochondrion membrane. In terms of biological role, mitochondrial membrane ATP synthase (F(1)F(0) ATP synthase or Complex V) produces ATP from ADP in the presence of a proton gradient across the membrane which is generated by electron transport complexes of the respiratory chain. F-type ATPases consist of two structural domains, F(1) - containing the extramembraneous catalytic core and F(0) - containing the membrane proton channel, linked together by a central stalk and a peripheral stalk. During catalysis, ATP synthesis in the catalytic domain of F(1) is coupled via a rotary mechanism of the central stalk subunits to proton translocation. Part of the complex F(0) domain. A homomeric c-ring of probably 10 subunits is part of the complex rotary element. This is ATP synthase subunit 9, mitochondrial from Rhizopus oryzae (Mucormycosis agent).